We begin with the raw amino-acid sequence, 282 residues long: Small ribosomal subunit protein uS2 (282 aa).

The tract at residues 245–265 is disordered; sequence AEEAVEELPLPTGEAQDEASS.

Belongs to the universal ribosomal protein uS2 family.

The sequence is that of Small ribosomal subunit protein uS2 from Chlamydia trachomatis serovar A (strain ATCC VR-571B / DSM 19440 / HAR-13).